The chain runs to 180 residues: MSRIGRKSIPVPTGVDVTIAGQTVTVKGPKGELSHTIAEPITIDRAEDGQLNVARPNDERKAKELHGLSRTLVANMIVGVTEGYRKSLEIAGTGYRVTAKGKDLEFALGFSHPVTVVAPEGITFSVEKPTLFHVAGINKQLVGEVAANIRKIRPPEPYKGKGVKYQGEVIRRKAGKAGKK.

The protein belongs to the universal ribosomal protein uL6 family. As to quaternary structure, part of the 50S ribosomal subunit.

Functionally, this protein binds to the 23S rRNA, and is important in its secondary structure. It is located near the subunit interface in the base of the L7/L12 stalk, and near the tRNA binding site of the peptidyltransferase center. In Salinispora tropica (strain ATCC BAA-916 / DSM 44818 / JCM 13857 / NBRC 105044 / CNB-440), this protein is Large ribosomal subunit protein uL6.